Here is a 482-residue protein sequence, read N- to C-terminus: Early growth response protein 4 (482 aa).

Residues D274–R357 form a disordered region. A compositionally biased stretch (low complexity) spans E280–S290. Over residues G291–F302 the composition is skewed to gly residues. Over residues P337–P349 the composition is skewed to pro residues. C2H2-type zinc fingers lie at residues F376–H400, F406–H428, and F434–H456.

The protein belongs to the EGR C2H2-type zinc-finger protein family. As to expression, expressed in brain. In the cerebellum and frontal cortex.

It is found in the nucleus. Functionally, transcriptional regulator. Recognizes and binds to the DNA sequence 5'-GCGGGGGCG-3' (GSG). Activates the transcription of target genes whose products are required for mitogenesis and differentiation. The sequence is that of Early growth response protein 4 (EGR4) from Bos taurus (Bovine).